The chain runs to 319 residues: Taste receptor type 2 member 39 (319 aa).

Over 1–16 (MAQPSNYWKQDVLPLS) the chain is Extracellular. A helical membrane pass occupies residues 17-37 (ILMLTLVATECTIGIIASGIV). Over 38–65 (MAVNAVSWVQKKAISITTRILLLLSVSR) the chain is Cytoplasmic. A helical membrane pass occupies residues 66-86 (IGLQSIMLIEITSSIFNVAFY). Residues 87-97 (NSVLYRVSNVS) are Extracellular-facing. Asparagine 95 carries an N-linked (GlcNAc...) asparagine glycan. Residues 98–118 (FVFLNYCSLWFAALLSFFHFV) traverse the membrane as a helical segment. At 119–137 (KIANFSYPLFFKLKWRISE) the chain is on the cytoplasmic side. A helical membrane pass occupies residues 138–158 (LMPWLLWLSVFISFSSSMFFS). At 159 to 194 (KHKFTVNNNNSLSNNICNFTMKLYVVETNVVNVSFL) the chain is on the extracellular side. Asparagine 167, asparagine 176, and asparagine 190 each carry an N-linked (GlcNAc...) asparagine glycan. The chain crosses the membrane as a helical span at residues 195–215 (FISGILPPLTMFVATATLLIF). The Cytoplasmic portion of the chain corresponds to 216–247 (SLRRHTLNMRNSATGSRNPCIEAHMQAIKETS). The helical transmembrane segment at 248–268 (CFLFLYILNAAALLLSTSNIV) threads the bilayer. Over 269 to 273 (DASLF) the chain is Extracellular. The helical transmembrane segment at 274-294 (WSIVIRIVLPVYPAGHSVLLI) threads the bilayer. Residues 295-319 (QNNPGLRRTWKHLQSQIHLYLQNRF) lie on the Cytoplasmic side of the membrane.

Belongs to the G-protein coupled receptor T2R family.

It localises to the membrane. Its function is as follows. Putative taste receptor which may play a role in the perception of bitterness. The polypeptide is Taste receptor type 2 member 39 (Tas2r39) (Mus musculus (Mouse)).